A 199-amino-acid chain; its full sequence is Recombination protein RecR (199 aa).

The C4-type zinc finger occupies 58-73; sequence CLVCGNVTGSDICPIC. Positions 81–176 constitute a Toprim domain; the sequence is GEICVVTDVA…AVTGLAQGVP (96 aa).

The protein belongs to the RecR family.

May play a role in DNA repair. It seems to be involved in an RecBC-independent recombinational process of DNA repair. It may act with RecF and RecO. The chain is Recombination protein RecR from Paracoccus denitrificans (strain Pd 1222).